The following is a 948-amino-acid chain: UvrABC system protein A (948 aa).

An ATP-binding site is contributed by 33-40 (GLSGSGKS). Residues 252 to 279 (CPICGFSIGELEPRMFSFNSPFGACPTC) form a C4-type zinc finger. 2 consecutive ABC transporter domains span residues 309 to 587 (WIPT…KKSL) and 607 to 935 (ASDR…KYLK). 639–646 (GVSGSGKS) is a binding site for ATP. A C4-type zinc finger spans residues 738 to 764 (CEACKGDGIIKIEMHFLPDVYVPCEVC).

This sequence belongs to the ABC transporter superfamily. UvrA family. Forms a heterotetramer with UvrB during the search for lesions.

The protein resides in the cytoplasm. In terms of biological role, the UvrABC repair system catalyzes the recognition and processing of DNA lesions. UvrA is an ATPase and a DNA-binding protein. A damage recognition complex composed of 2 UvrA and 2 UvrB subunits scans DNA for abnormalities. When the presence of a lesion has been verified by UvrB, the UvrA molecules dissociate. The chain is UvrABC system protein A from Staphylococcus aureus (strain N315).